A 180-amino-acid polypeptide reads, in one-letter code: Nudix hydrolase 16, mitochondrial (180 aa).

The region spanning glycine 18 to phenylalanine 162 is the Nudix hydrolase domain. Phenylalanine 60 provides a ligand contact to substrate. Mn(2+) contacts are provided by glycine 63, glutamate 78, glutamate 82, and glutamate 144. Positions glycine 63 to glycine 84 match the Nudix box motif.

Belongs to the Nudix hydrolase family. Mg(2+) serves as cofactor. Requires Mn(2+) as cofactor. Expressed in roots, leaves, stems and inflorescences.

The protein localises to the mitochondrion. Probably mediates the hydrolysis of some nucleoside diphosphate derivatives. The sequence is that of Nudix hydrolase 16, mitochondrial (NUDT16) from Arabidopsis thaliana (Mouse-ear cress).